The sequence spans 476 residues: Cytochrome P450 monooxygenase ppzE (476 aa).

Cys-452 provides a ligand contact to heme.

This sequence belongs to the cytochrome P450 family. The cofactor is heme.

It functions in the pathway secondary metabolite biosynthesis. Functionally, cytochrome P450 monooxygenase; part of the gene cluster that mediates the biosynthesis of pyrrolopyrazines, secondary metabolites showing insecticidal activity. The role of ppzE within the pathway has still to be determined. The single multifunctional NRPS ppzA is sufficient to produce peramine via condensation of 1-pyrroline-5-carboxylate and arginine, N-methylation of the alpha-amino group of arginine and reduction of the thioester and the cyclization to form an iminium ion resulting in release from the peptide synthetase. Deprotonation of this intermediate and oxidation of the pyrroline ring would give rise to peramine. In Epichloe species that produce only peramine, the peramine synthetase gene is not localized in a gene cluster, in contrast to Metarhizium species that contain additional pyrrolopyrazine biosynthesis genes. The 2-oxoglutarate-Fe(II) type oxidoreductase ppzC hydroxylates peramine to yield the newly identified compound 8-hydroxyperamine whereas ppzD converts L-proline into trans-4-hydroxy-L-proline, a precursor of peramine biosynthesis. This chain is Cytochrome P450 monooxygenase ppzE, found in Metarhizium majus (strain ARSEF 297).